The following is a 437-amino-acid chain: MLQIKGFRAALLGIFLLSLLGVQLNAKAEKQTVYVIPVEKNVEQGLASFLSRSLQDAKDAHADHIILDINTPGGLVKSAIDMADLITESEIPVTAYVNKRALSAGAYIALQADHIYMAPGGKMGAAAIVDGQGNAADQKAQSLWLAEMEDAAVKNNRDPKYALAMADPDIDAKEVGAPKGDLLTLNADKAIEVGYSEGTADNLSTLVKKLGFEKAQISYAKESFAEKTARWLTNPVIVPILLTIAFLGLTVELFSPGVGLPGTAGLIALLLFFYGHLAAGLAGYETVLLFIAGVILILLEIFLPGGIIGLLGLGAIIASLFLAAGSFTVMAVSLLIASAVSITAFILLTRVLGKRMKFFKKLILNDSTNTESGYVSNQTRTDLMGKVGITFTPLRPSGTVIIDDERLDVVSEGSFTEKDKKVKVIKVEGSRIVVREI.

5 helical membrane passes run 2–22, 231–251, 253–273, 288–308, and 316–336; these read LQIK…LLGV, WLTN…GLTV, LFSP…LLFF, LLFI…GGII, and IIAS…SLLI.

This sequence belongs to the NfeD family.

The protein localises to the cell membrane. The polypeptide is Membrane protein NfeD1b (Bacillus subtilis (strain 168)).